We begin with the raw amino-acid sequence, 172 residues long: Small ribosomal subunit protein uS5 (172 aa).

Residues 17-80 enclose the S5 DRBM domain; it reads LREKMISVNR…EQARRNMFKV (64 aa).

It belongs to the universal ribosomal protein uS5 family. Part of the 30S ribosomal subunit. Contacts proteins S4 and S8.

Its function is as follows. With S4 and S12 plays an important role in translational accuracy. In terms of biological role, located at the back of the 30S subunit body where it stabilizes the conformation of the head with respect to the body. The protein is Small ribosomal subunit protein uS5 of Paraburkholderia xenovorans (strain LB400).